We begin with the raw amino-acid sequence, 110 residues long: MMKGQLAGLMKQAQQMQENMKKMQEQLAQIEVEGQSGAGLVKVVMTCKNDVKRVTIDPSLLAEGEDKDLLEDLVAAAFNDAVRKAEATTQEKMGSMTSGLPLPPGFKLPF.

The segment covering 88–98 has biased composition (polar residues); that stretch reads TTQEKMGSMTS. Residues 88–110 form a disordered region; the sequence is TTQEKMGSMTSGLPLPPGFKLPF. A compositionally biased stretch (pro residues) spans 101–110; the sequence is PLPPGFKLPF.

This sequence belongs to the YbaB/EbfC family. In terms of assembly, homodimer.

The protein localises to the cytoplasm. The protein resides in the nucleoid. Binds to DNA and alters its conformation. May be involved in regulation of gene expression, nucleoid organization and DNA protection. The sequence is that of Nucleoid-associated protein RALTA_A1934 from Cupriavidus taiwanensis (strain DSM 17343 / BCRC 17206 / CCUG 44338 / CIP 107171 / LMG 19424 / R1) (Ralstonia taiwanensis (strain LMG 19424)).